The following is a 100-amino-acid chain: MWGFLVLKARWLVTPVRTLATEAGQKPSLRGLLDVGNIQHRAARARGLTRGVIRVSPQERSQQNQSAPKGPTPSTRPKPRTLGPQAHSLALQSVDLLFRP.

A signal peptide spans 1-18 (MWGFLVLKARWLVTPVRT). The tract at residues 48 to 86 (LTRGVIRVSPQERSQQNQSAPKGPTPSTRPKPRTLGPQA) is disordered. Over residues 58–69 (QERSQQNQSAPK) the composition is skewed to polar residues. N-linked (GlcNAc...) asparagine glycosylation is present at Asn-64.

Its subcellular location is the secreted. This is an uncharacterized protein from Homo sapiens (Human).